The sequence spans 105 residues: UPF0235 protein A1E_05380 (105 aa).

The protein belongs to the UPF0235 family.

The chain is UPF0235 protein A1E_05380 from Rickettsia canadensis (strain McKiel).